The sequence spans 537 residues: Putative cysteine ligase BshC (537 aa).

Positions 422-450 (IEKVEGMIEQQRRLNKDLLDEVAGNQNNI) form a coiled coil.

This sequence belongs to the BshC family.

Involved in bacillithiol (BSH) biosynthesis. May catalyze the last step of the pathway, the addition of cysteine to glucosamine malate (GlcN-Mal) to generate BSH. In Staphylococcus aureus (strain COL), this protein is Putative cysteine ligase BshC.